Reading from the N-terminus, the 474-residue chain is 3-isopropylmalate dehydratase large subunit (474 aa).

The [4Fe-4S] cluster site is built by Cys-353, Cys-414, and Cys-417.

It belongs to the aconitase/IPM isomerase family. LeuC type 1 subfamily. Heterodimer of LeuC and LeuD. It depends on [4Fe-4S] cluster as a cofactor.

It catalyses the reaction (2R,3S)-3-isopropylmalate = (2S)-2-isopropylmalate. The protein operates within amino-acid biosynthesis; L-leucine biosynthesis; L-leucine from 3-methyl-2-oxobutanoate: step 2/4. In terms of biological role, catalyzes the isomerization between 2-isopropylmalate and 3-isopropylmalate, via the formation of 2-isopropylmaleate. This is 3-isopropylmalate dehydratase large subunit from Teredinibacter turnerae (strain ATCC 39867 / T7901).